The primary structure comprises 494 residues: PTS system cellobiose-specific EIIC component (494 aa).

Positions 8 to 481 (MEKYLVPVAA…IITFVIWVPF (474 aa)) constitute a PTS EIIC type-3 domain. Transmembrane regions (helical) follow at residues 32 to 52 (FIGM…SAIV), 92 to 112 (ISAL…AFSW), 119 to 139 (AYGV…FAGL), 188 to 208 (AYFT…KLML), 227 to 247 (FLAI…YYII), 274 to 294 (IFSV…GLHG), 355 to 375 (AFAW…IILF), 406 to 426 (VVLN…SVII), and 463 to 483 (AIVL…PFVI).

Its subcellular location is the cell membrane. In terms of biological role, the phosphoenolpyruvate-dependent sugar phosphotransferase system (PTS), a major carbohydrate active transport system, catalyzes the phosphorylation of incoming sugar substrates concomitant with their translocation across the cell membrane. Involved in cellobiose transport with PtcA and PtcB. This system can also transport lactose. In Lactococcus lactis subsp. lactis (strain IL1403) (Streptococcus lactis), this protein is PTS system cellobiose-specific EIIC component.